A 382-amino-acid polypeptide reads, in one-letter code: ATP phosphoribosyltransferase regulatory subunit (382 aa).

It belongs to the class-II aminoacyl-tRNA synthetase family. HisZ subfamily. In terms of assembly, heteromultimer composed of HisG and HisZ subunits.

The protein resides in the cytoplasm. It functions in the pathway amino-acid biosynthesis; L-histidine biosynthesis; L-histidine from 5-phospho-alpha-D-ribose 1-diphosphate: step 1/9. In terms of biological role, required for the first step of histidine biosynthesis. May allow the feedback regulation of ATP phosphoribosyltransferase activity by histidine. In Lacticaseibacillus paracasei (strain ATCC 334 / BCRC 17002 / CCUG 31169 / CIP 107868 / KCTC 3260 / NRRL B-441) (Lactobacillus paracasei), this protein is ATP phosphoribosyltransferase regulatory subunit.